Consider the following 95-residue polypeptide: Citrate lyase acyl carrier protein (95 aa).

Ser14 carries the O-(phosphoribosyl dephospho-coenzyme A)serine modification.

The protein belongs to the CitD family. In terms of assembly, oligomer with a subunit composition of (alpha,beta,gamma)6.

The protein resides in the cytoplasm. Functionally, covalent carrier of the coenzyme of citrate lyase. This Haemophilus influenzae (strain PittEE) protein is Citrate lyase acyl carrier protein.